Consider the following 160-residue polypeptide: Cell division protein SepF (160 aa).

The span at 18–30 (AEGEDDFEDDVDT) shows a compositional bias: acidic residues. Residues 18–72 (AEGEDDFEDDVDTGETSFDSDHSVTPMPSSSASASTPSAPREQSNPFQGGRVSRI) are disordered. Over residues 45 to 57 (PSSSASASTPSAP) the composition is skewed to low complexity.

Belongs to the SepF family. As to quaternary structure, homodimer. Interacts with FtsZ.

The protein localises to the cytoplasm. Its function is as follows. Cell division protein that is part of the divisome complex and is recruited early to the Z-ring. Probably stimulates Z-ring formation, perhaps through the cross-linking of FtsZ protofilaments. Its function overlaps with FtsA. The chain is Cell division protein SepF from Bifidobacterium adolescentis (strain ATCC 15703 / DSM 20083 / NCTC 11814 / E194a).